Here is a 193-residue protein sequence, read N- to C-terminus: Ribosomal RNA small subunit methyltransferase G (193 aa).

S-adenosyl-L-methionine-binding positions include Gly61, Leu66, 112–113 (IE), and Arg126.

The protein belongs to the methyltransferase superfamily. RNA methyltransferase RsmG family.

It is found in the cytoplasm. It catalyses the reaction guanosine(527) in 16S rRNA + S-adenosyl-L-methionine = N(7)-methylguanosine(527) in 16S rRNA + S-adenosyl-L-homocysteine. Specifically methylates the N7 position of guanine in position 527 of 16S rRNA. This chain is Ribosomal RNA small subunit methyltransferase G, found in Paracoccus denitrificans (strain Pd 1222).